Consider the following 243-residue polypeptide: CD48 antigen (243 aa).

Residues 1 to 26 form the signal peptide; the sequence is MCSRGWDSCLALELLLLPLSLLVTSI. 2 consecutive Ig-like C2-type domains span residues 29-127 and 132-212; these read HLVH…KLQV and PKPV…VCLS. Residues Asn-40, Asn-44, Asn-104, Asn-162, and Asn-189 are each glycosylated (N-linked (GlcNAc...) asparagine). A disulfide bridge connects residues Cys-154 and Cys-196. The GPI-anchor amidated serine moiety is linked to residue Ser-220. Positions 221 to 243 are cleaved as a propeptide — removed in mature form; sequence FGVEWIASWLVVTVPTILGLLLT.

In terms of assembly, interacts with CD2. Interacts with CD244; this interaction is possible not only on different cells (trans interaction) but also on the same cell (cis interaction). Interacts with LCK. In terms of tissue distribution, widely expressed on all hematopoietic cells.

The protein localises to the cell membrane. It is found in the membrane raft. Its subcellular location is the secreted. Glycosylphosphatidylinositol (GPI)-anchored cell surface glycoprotein that interacts via its N-terminal immunoglobulin domain with cell surface receptors including CD244/2B4 or CD2 to regulate immune cell function and activation. Participates in T-cell signaling transduction by associating with CD2 and efficiently bringing the Src family protein kinase LCK and LAT to the TCR/CD3 complex. In turn, promotes LCK phosphorylation and subsequent activation. Induces the phosphorylation of the cytoplasmic immunoreceptortyrosine switch motifs (ITSMs) of CD244 initiating a series of signaling events that leads to the generation of the immunological synapse and the directed release of cytolytic granules containing perforin and granzymes by T-lymphocytes and NK-cells. In Homo sapiens (Human), this protein is CD48 antigen (CD48).